Here is a 170-residue protein sequence, read N- to C-terminus: ATP synthase subunit b (170 aa).

Residues 22–41 form a helical membrane-spanning segment; that stretch reads ILNWAVVVFGLYKFLPGFLG. The interval 72-98 is disordered; that stretch reads AKKDLSSAEEKASQIKADSLKRSESIR.

The protein belongs to the ATPase B chain family. As to quaternary structure, F-type ATPases have 2 components, F(1) - the catalytic core - and F(0) - the membrane proton channel. F(1) has five subunits: alpha(3), beta(3), gamma(1), delta(1), epsilon(1). F(0) has four main subunits: a(1), b(1), b'(1) and c(10-14). The alpha and beta chains form an alternating ring which encloses part of the gamma chain. F(1) is attached to F(0) by a central stalk formed by the gamma and epsilon chains, while a peripheral stalk is formed by the delta, b and b' chains.

The protein localises to the cellular thylakoid membrane. F(1)F(0) ATP synthase produces ATP from ADP in the presence of a proton or sodium gradient. F-type ATPases consist of two structural domains, F(1) containing the extramembraneous catalytic core and F(0) containing the membrane proton channel, linked together by a central stalk and a peripheral stalk. During catalysis, ATP synthesis in the catalytic domain of F(1) is coupled via a rotary mechanism of the central stalk subunits to proton translocation. Functionally, component of the F(0) channel, it forms part of the peripheral stalk, linking F(1) to F(0). In Prochlorococcus marinus (strain MIT 9301), this protein is ATP synthase subunit b.